A 310-amino-acid chain; its full sequence is UDP-N-acetylenolpyruvoylglucosamine reductase (310 aa).

The 180-residue stretch at 34-213 (RAGGNAEVLF…LRRMNEITSS (180 aa)) folds into the FAD-binding PCMH-type domain. Arg178 is a catalytic residue. The Proton donor role is filled by Ser227. Residue Glu297 is part of the active site.

It belongs to the MurB family. FAD serves as cofactor.

It localises to the cytoplasm. The catalysed reaction is UDP-N-acetyl-alpha-D-muramate + NADP(+) = UDP-N-acetyl-3-O-(1-carboxyvinyl)-alpha-D-glucosamine + NADPH + H(+). The protein operates within cell wall biogenesis; peptidoglycan biosynthesis. Functionally, cell wall formation. This Parvibaculum lavamentivorans (strain DS-1 / DSM 13023 / NCIMB 13966) protein is UDP-N-acetylenolpyruvoylglucosamine reductase.